A 186-amino-acid polypeptide reads, in one-letter code: Elongation factor P (186 aa).

The protein belongs to the elongation factor P family.

It is found in the cytoplasm. It functions in the pathway protein biosynthesis; polypeptide chain elongation. Its function is as follows. Involved in peptide bond synthesis. Stimulates efficient translation and peptide-bond synthesis on native or reconstituted 70S ribosomes in vitro. Probably functions indirectly by altering the affinity of the ribosome for aminoacyl-tRNA, thus increasing their reactivity as acceptors for peptidyl transferase. This Laribacter hongkongensis (strain HLHK9) protein is Elongation factor P.